A 355-amino-acid polypeptide reads, in one-letter code: UDP-3-O-acylglucosamine N-acyltransferase (355 aa).

His-248 acts as the Proton acceptor in catalysis.

Belongs to the transferase hexapeptide repeat family. LpxD subfamily. In terms of assembly, homotrimer.

The enzyme catalyses a UDP-3-O-[(3R)-3-hydroxyacyl]-alpha-D-glucosamine + a (3R)-hydroxyacyl-[ACP] = a UDP-2-N,3-O-bis[(3R)-3-hydroxyacyl]-alpha-D-glucosamine + holo-[ACP] + H(+). It participates in bacterial outer membrane biogenesis; LPS lipid A biosynthesis. In terms of biological role, catalyzes the N-acylation of UDP-3-O-acylglucosamine using 3-hydroxyacyl-ACP as the acyl donor. Is involved in the biosynthesis of lipid A, a phosphorylated glycolipid that anchors the lipopolysaccharide to the outer membrane of the cell. This is UDP-3-O-acylglucosamine N-acyltransferase from Synechococcus elongatus (strain ATCC 33912 / PCC 7942 / FACHB-805) (Anacystis nidulans R2).